The chain runs to 801 residues: Ribosome biogenesis protein ERB1 (801 aa).

2 disordered regions span residues 1–135 and 358–377; these read MGSK…LEDR and PEYL…DPED. Positions 35–90 are enriched in acidic residues; sequence SEDEEDYIPSSEVDEDDDDDADESASEDSDDSNDSEDDEVEEDDEALLSDEIPSEG. Basic and acidic residues-rich tracts occupy residues 91 to 113, 124 to 135, and 362 to 377; these read ESEK…KEPS, PPRKEDEELEDR, and PTKE…DPED. WD repeat units follow at residues 451–490 and 494–534; these read GHEG…QVWS and NGDE…VTPA. The tract at residues 546–570 is disordered; that stretch reads GFGHATNGKQQANLPPGKEPPGKWA. WD repeat units follow at residues 586–628, 631–669, 672–711, 715–755, and 771–801; these read TVRS…TQIP, KLNG…LVKI, PGAK…RPYK, FHTE…DQLE, and VNKL…RLWM.

Belongs to the WD repeat BOP1/ERB1 family. In terms of assembly, component of the NOP7 complex, composed of ERB1, NOP7 and YTM1. The complex is held together by ERB1, which interacts with NOP7 via its N-terminal domain and with YTM1 via a high-affinity interaction between the seven-bladed beta-propeller domains of the 2 proteins. The NOP7 complex associates with the 66S pre-ribosome.

Its subcellular location is the nucleus. The protein localises to the nucleolus. It is found in the nucleoplasm. In terms of biological role, component of the NOP7 complex, which is required for maturation of the 25S and 5.8S ribosomal RNAs and formation of the 60S ribosome. The protein is Ribosome biogenesis protein ERB1 of Chaetomium thermophilum (strain DSM 1495 / CBS 144.50 / IMI 039719) (Thermochaetoides thermophila).